We begin with the raw amino-acid sequence, 141 residues long: 16 kDa protein (141 aa).

The tract at residues 100–119 (TVKKSRNSKPSKKKFKERKE) is disordered. Positions 102–115 (KKSRNSKPSKKKFK) are enriched in basic residues.

In Tobacco rattle virus (strain PLB), this protein is 16 kDa protein.